Reading from the N-terminus, the 1273-residue chain is DNA-directed RNA polymerase subunit beta (1273 aa).

Belongs to the RNA polymerase beta chain family. As to quaternary structure, the RNAP catalytic core consists of 2 alpha, 1 beta, 1 beta' and 1 omega subunit. When a sigma factor is associated with the core the holoenzyme is formed, which can initiate transcription.

It catalyses the reaction RNA(n) + a ribonucleoside 5'-triphosphate = RNA(n+1) + diphosphate. In terms of biological role, DNA-dependent RNA polymerase catalyzes the transcription of DNA into RNA using the four ribonucleoside triphosphates as substrates. This Phytoplasma mali (strain AT) protein is DNA-directed RNA polymerase subunit beta.